A 325-amino-acid polypeptide reads, in one-letter code: Beta-ketoacyl-[acyl-carrier-protein] synthase III (325 aa).

Catalysis depends on residues cysteine 112 and histidine 250. The segment at 251–255 is ACP-binding; it reads QANIR. Residue asparagine 280 is part of the active site.

Belongs to the thiolase-like superfamily. FabH family. Homodimer.

It localises to the cytoplasm. The catalysed reaction is malonyl-[ACP] + acetyl-CoA + H(+) = 3-oxobutanoyl-[ACP] + CO2 + CoA. It participates in lipid metabolism; fatty acid biosynthesis. Its function is as follows. Catalyzes the condensation reaction of fatty acid synthesis by the addition to an acyl acceptor of two carbons from malonyl-ACP. Catalyzes the first condensation reaction which initiates fatty acid synthesis and may therefore play a role in governing the total rate of fatty acid production. Possesses both acetoacetyl-ACP synthase and acetyl transacylase activities. Its substrate specificity determines the biosynthesis of branched-chain and/or straight-chain of fatty acids. This chain is Beta-ketoacyl-[acyl-carrier-protein] synthase III, found in Clostridium acetobutylicum (strain ATCC 824 / DSM 792 / JCM 1419 / IAM 19013 / LMG 5710 / NBRC 13948 / NRRL B-527 / VKM B-1787 / 2291 / W).